The sequence spans 405 residues: Growth/differentiation factor 11 (405 aa).

An N-terminal signal peptide occupies residues methionine 1 to alanine 24. A propeptide spanning residues alanine 25 to arginine 296 is cleaved from the precursor. Residue asparagine 92 is glycosylated (N-linked (GlcNAc...) asparagine). Intrachain disulfides connect cysteine 302/cysteine 312, cysteine 311/cysteine 370, cysteine 339/cysteine 402, and cysteine 343/cysteine 404.

The protein belongs to the TGF-beta family. In terms of assembly, homodimer; disulfide-linked. Interacts directly with ACVR2B. Interacts directly with ACVR2A. Interacts with ACVR1B, TGFBR1 and ACVR1C in an ACVR2B-dependent manner. Interacts with FST isoform 2/FS288. In terms of processing, synthesized as large precursor molecule that undergoes proteolytic cleavage by furin-like proteases. This produces an inactive form consisting of the mature C-terminal portion non-covalently bound to its cleaved N-terminal propeptide. Activation of the mature form requires additional cleavage of the propeptide by a tolloid-like metalloproteinase.

The protein resides in the secreted. In terms of biological role, secreted signal that acts globally to regulate anterior/posterior axial patterning during development. May play critical roles in patterning both mesodermal and neural tissues. It is required for proper vertebral patterning and orofacial development. Signals through activin receptors type-2, ACVR2A and ACVR2B, and activin receptors type-1, ACVR1B, ACVR1C and TGFBR1 leading to the phosphorylation of SMAD2 and SMAD3. The polypeptide is Growth/differentiation factor 11 (Gdf11) (Rattus norvegicus (Rat)).